A 150-amino-acid polypeptide reads, in one-letter code: Head completion nuclease (150 aa).

Active-site residues include Glu29, Asp68, and Lys84.

It belongs to the Caudovirales head completion nuclease family.

Functionally, during phage morphogenesis, plays an essential role in the head-tail joining step. The associated nuclease activity is essential for morphogenesis, possibly by cleaving packaged DNA to enable the joining of heads to tails. Displays both exo- and endonuclease activity. This is Head completion nuclease (50) from Enterobacteria phage T4 (Bacteriophage T4).